Consider the following 359-residue polypeptide: Transcription factor MYB115 (359 aa).

The segment covering 1–17 (MYHQNLISSTPNQNSNP) has biased composition (polar residues). The interval 1 to 21 (MYHQNLISSTPNQNSNPHDWD) is disordered. HTH myb-type domains follow at residues 153–208 (KDII…RPNI) and 209–259 (KKND…RRLH). 2 consecutive DNA-binding regions (H-T-H motif) follow at residues 181-204 (WTSI…HNHL) and 232-255 (WTEI…NATK).

Accumulates in reproductive organs (e.g. flowers and siliques). Expressed at very low levels in vegetative organs.

It is found in the nucleus. Functionally, transcription activator that recognizes the motif 5'-TAACGG-3' in the promoter of target genes. Promotes vegetative-to-embryonic transition and the formation of somatic embryos from root explants in a WUS-independent manner. Together with MYB118, activates the transcription of S-ACP-DES2/AAD2 and S-ACP-DES3/AAD3 thus promoting the biosynthesis of omega-7 monounsaturated fatty acid in seed endosperm. The chain is Transcription factor MYB115 from Arabidopsis thaliana (Mouse-ear cress).